A 204-amino-acid chain; its full sequence is Holliday junction branch migration complex subunit RuvA (204 aa).

A domain I region spans residues 1 to 65 (MIGRLRGAVA…SAGLRLYGFG (65 aa)). A domain II region spans residues 66-142 (TREDRRAFVL…PITDGPVLMT (77 aa)). Residues 143 to 152 (APGAVAAAPA) form a flexible linker region. The tract at residues 152–204 (AKAAPTGDAVAALMGLGVAEVNARRVVEAAAAKLGDEATVQALIKAGLQELGR) is domain III.

It belongs to the RuvA family. As to quaternary structure, homotetramer. Forms an RuvA(8)-RuvB(12)-Holliday junction (HJ) complex. HJ DNA is sandwiched between 2 RuvA tetramers; dsDNA enters through RuvA and exits via RuvB. An RuvB hexamer assembles on each DNA strand where it exits the tetramer. Each RuvB hexamer is contacted by two RuvA subunits (via domain III) on 2 adjacent RuvB subunits; this complex drives branch migration. In the full resolvosome a probable DNA-RuvA(4)-RuvB(12)-RuvC(2) complex forms which resolves the HJ.

Its subcellular location is the cytoplasm. Its function is as follows. The RuvA-RuvB-RuvC complex processes Holliday junction (HJ) DNA during genetic recombination and DNA repair, while the RuvA-RuvB complex plays an important role in the rescue of blocked DNA replication forks via replication fork reversal (RFR). RuvA specifically binds to HJ cruciform DNA, conferring on it an open structure. The RuvB hexamer acts as an ATP-dependent pump, pulling dsDNA into and through the RuvAB complex. HJ branch migration allows RuvC to scan DNA until it finds its consensus sequence, where it cleaves and resolves the cruciform DNA. The protein is Holliday junction branch migration complex subunit RuvA of Caulobacter sp. (strain K31).